The primary structure comprises 290 residues: ORF2/4 protein (290 aa).

A disordered region spans residues 67-218; that stretch reads LPAAPEAPGD…KSRYQPYLVT (152 aa). The span at 121–130 shows a compositional bias: basic and acidic residues; sequence RPQETQEGHR. The span at 181–190 shows a compositional bias: low complexity; sequence AAQAAAAATA. A compositionally biased stretch (polar residues) spans 191–200; sequence NPGSQTQTPV.

The chain is ORF2/4 protein from Torque teno virus (isolate Human/Japan/TRM1/1999) (TTV).